Here is a 240-residue protein sequence, read N- to C-terminus: Probable transcriptional activator (240 aa).

An essential for the oxygen-regulated activity region spans residues 17–28 (CTSCQARHGVVC). An HTH crp-type domain is found at 158–232 (RTAEEKVASL…FRHIIVPDMD (75 aa)). The H-T-H motif DNA-binding region spans 191-210 (RAEIADFLGLTIETVSRQMT).

Promotes the microaerobic and symbiotic induction of fixN, possibly by binding to the FNR consensus binding site upstream of fixN. This Rhizobium leguminosarum bv. viciae protein is Probable transcriptional activator (fnrN).